The following is a 1373-amino-acid chain: DNA-directed RNA polymerase subunit beta (1373 aa).

The protein belongs to the RNA polymerase beta chain family. The RNAP catalytic core consists of 2 alpha, 1 beta, 1 beta' and 1 omega subunit. When a sigma factor is associated with the core the holoenzyme is formed, which can initiate transcription.

It catalyses the reaction RNA(n) + a ribonucleoside 5'-triphosphate = RNA(n+1) + diphosphate. Its function is as follows. DNA-dependent RNA polymerase catalyzes the transcription of DNA into RNA using the four ribonucleoside triphosphates as substrates. The sequence is that of DNA-directed RNA polymerase subunit beta from Rickettsia peacockii (strain Rustic).